Consider the following 201-residue polypeptide: Recombination protein RecR (201 aa).

The C4-type zinc-finger motif lies at 59 to 74 (CKICGNIDTENICRIC). One can recognise a Toprim domain in the interval 82–177 (SIIAIVETVA…KISRLASGIP (96 aa)).

It belongs to the RecR family.

Its function is as follows. May play a role in DNA repair. It seems to be involved in an RecBC-independent recombinational process of DNA repair. It may act with RecF and RecO. The chain is Recombination protein RecR from Rickettsia massiliae (strain Mtu5).